The sequence spans 320 residues: Beta-ketoacyl-[acyl-carrier-protein] synthase III (320 aa).

Residues cysteine 114 and histidine 247 contribute to the active site. The ACP-binding stretch occupies residues glutamine 248 to arginine 252. Residue asparagine 277 is part of the active site.

Belongs to the thiolase-like superfamily. FabH family. Homodimer.

It localises to the cytoplasm. The catalysed reaction is malonyl-[ACP] + acetyl-CoA + H(+) = 3-oxobutanoyl-[ACP] + CO2 + CoA. The protein operates within lipid metabolism; fatty acid biosynthesis. In terms of biological role, catalyzes the condensation reaction of fatty acid synthesis by the addition to an acyl acceptor of two carbons from malonyl-ACP. Catalyzes the first condensation reaction which initiates fatty acid synthesis and may therefore play a role in governing the total rate of fatty acid production. Possesses both acetoacetyl-ACP synthase and acetyl transacylase activities. Its substrate specificity determines the biosynthesis of branched-chain and/or straight-chain of fatty acids. The chain is Beta-ketoacyl-[acyl-carrier-protein] synthase III from Neisseria gonorrhoeae (strain ATCC 700825 / FA 1090).